We begin with the raw amino-acid sequence, 372 residues long: Ligninase C (372 aa).

Positions 1–26 (MAFKSLLSFVSVIGALQGANAALTRR) are cleaved as a signal peptide. Catalysis depends on His-74, which acts as the Proton acceptor. Ca(2+) contacts are provided by Asp-75, Gly-93, Asp-95, and Ser-97. N-linked (GlcNAc...) asparagine glycosylation is present at Asn-129. His-205 is a binding site for heme b. Residues Thr-206, Asp-223, Thr-225, Leu-228, and Asp-230 each contribute to the Ca(2+) site. The interval 346 to 372 (TPFPTFPTDPGPKTAVAPVPKPPAARK) is disordered.

It belongs to the peroxidase family. Ligninase subfamily. The cofactor is Ca(2+). Heme b is required as a cofactor.

It carries out the reaction 1-(3,4-dimethoxyphenyl)-2-(2-methoxyphenoxy)propane-1,3-diol + H2O2 = 3,4-dimethoxybenzaldehyde + guaiacol + glycolaldehyde + H2O. The catalysed reaction is 2 (3,4-dimethoxyphenyl)methanol + H2O2 = 2 (3,4-dimethoxyphenyl)methanol radical + 2 H2O. It functions in the pathway secondary metabolite metabolism; lignin degradation. Functionally, depolymerization of lignin. Catalyzes the C(alpha)-C(beta) cleavage of the propyl side chains of lignin. This Trametes versicolor (White-rot fungus) protein is Ligninase C.